The chain runs to 469 residues: 3-isopropylmalate dehydratase large subunit (469 aa).

[4Fe-4S] cluster-binding residues include Cys-350, Cys-410, and Cys-413.

It belongs to the aconitase/IPM isomerase family. LeuC type 1 subfamily. As to quaternary structure, heterodimer of LeuC and LeuD. [4Fe-4S] cluster serves as cofactor.

The catalysed reaction is (2R,3S)-3-isopropylmalate = (2S)-2-isopropylmalate. It participates in amino-acid biosynthesis; L-leucine biosynthesis; L-leucine from 3-methyl-2-oxobutanoate: step 2/4. Its function is as follows. Catalyzes the isomerization between 2-isopropylmalate and 3-isopropylmalate, via the formation of 2-isopropylmaleate. The chain is 3-isopropylmalate dehydratase large subunit from Mesorhizobium japonicum (strain LMG 29417 / CECT 9101 / MAFF 303099) (Mesorhizobium loti (strain MAFF 303099)).